A 200-amino-acid polypeptide reads, in one-letter code: MRQRRISGSNLMMVLCVVAMCRAVPINDLIYRASQQSDKLHALSSMLTQELGSEAFPIDRVLACHTSSLQTPTDKEQALQVSESDLLSLARSLLQAWSDPLEVLSSSTNVLPYSAQSTLSKTIQKMQEHSKDLKDGLDILSSKMGPAAQTITSLPFIETNEIGQDKITKLLSCFRRDSHKIDSFLKVLRCRAANMQPQVC.

The signal sequence occupies residues 1-23 (MRQRRISGSNLMMVLCVVAMCRA). 2 cysteine pairs are disulfide-bonded: cysteine 64/cysteine 173 and cysteine 190/cysteine 200.

The protein belongs to the somatotropin/prolactin family.

The protein localises to the secreted. The protein is Prolactin-2 (prl2) of Oreochromis mossambicus (Mozambique tilapia).